A 233-amino-acid chain; its full sequence is Probable 2-phosphosulfolactate phosphatase (233 aa).

This sequence belongs to the ComB family. It depends on Mg(2+) as a cofactor.

It carries out the reaction (2R)-O-phospho-3-sulfolactate + H2O = (2R)-3-sulfolactate + phosphate. In Clostridium tetani (strain Massachusetts / E88), this protein is Probable 2-phosphosulfolactate phosphatase.